We begin with the raw amino-acid sequence, 242 residues long: Ribonuclease PH (242 aa).

Phosphate is bound by residues R89 and 127–129; that span reads GTR.

It belongs to the RNase PH family. As to quaternary structure, homohexameric ring arranged as a trimer of dimers.

The enzyme catalyses tRNA(n+1) + phosphate = tRNA(n) + a ribonucleoside 5'-diphosphate. In terms of biological role, phosphorolytic 3'-5' exoribonuclease that plays an important role in tRNA 3'-end maturation. Removes nucleotide residues following the 3'-CCA terminus of tRNAs; can also add nucleotides to the ends of RNA molecules by using nucleoside diphosphates as substrates, but this may not be physiologically important. Probably plays a role in initiation of 16S rRNA degradation (leading to ribosome degradation) during starvation. This chain is Ribonuclease PH, found in Neisseria meningitidis serogroup B (strain ATCC BAA-335 / MC58).